We begin with the raw amino-acid sequence, 859 residues long: Leucine--tRNA ligase (859 aa).

Positions proline 42–histidine 52 match the 'HIGH' region motif. The 'KMSKS' region signature appears at lysine 618–serine 622. ATP is bound at residue lysine 621.

It belongs to the class-I aminoacyl-tRNA synthetase family.

The protein resides in the cytoplasm. It catalyses the reaction tRNA(Leu) + L-leucine + ATP = L-leucyl-tRNA(Leu) + AMP + diphosphate. This is Leucine--tRNA ligase from Shewanella oneidensis (strain ATCC 700550 / JCM 31522 / CIP 106686 / LMG 19005 / NCIMB 14063 / MR-1).